Here is a 426-residue protein sequence, read N- to C-terminus: Glutamyl-tRNA reductase (426 aa).

Substrate-binding positions include 52-55, Ser-110, 115-117, and Gln-121; these read TCNR and EYE. Residue Cys-53 is the Nucleophile of the active site. An NADP(+)-binding site is contributed by 190 to 195; it reads GAGEMA.

It belongs to the glutamyl-tRNA reductase family. Homodimer.

The enzyme catalyses (S)-4-amino-5-oxopentanoate + tRNA(Glu) + NADP(+) = L-glutamyl-tRNA(Glu) + NADPH + H(+). Its pathway is porphyrin-containing compound metabolism; protoporphyrin-IX biosynthesis; 5-aminolevulinate from L-glutamyl-tRNA(Glu): step 1/2. Its function is as follows. Catalyzes the NADPH-dependent reduction of glutamyl-tRNA(Glu) to glutamate 1-semialdehyde (GSA). The chain is Glutamyl-tRNA reductase from Saccharolobus solfataricus (strain ATCC 35092 / DSM 1617 / JCM 11322 / P2) (Sulfolobus solfataricus).